Consider the following 416-residue polypeptide: RNA polymerase sigma-C factor (416 aa).

The Polymerase core binding motif lies at 205 to 218 (DLVQEGTLGLERAV). A DNA-binding region (H-T-H motif) is located at residues 374 to 393 (LAEIGRALDLSRERVRQIES).

It belongs to the sigma-70 factor family.

Sigma factors are initiation factors that promote the attachment of RNA polymerase to specific initiation sites and are then released. This Nostoc sp. (strain PCC 7120 / SAG 25.82 / UTEX 2576) protein is RNA polymerase sigma-C factor (sigC).